Here is a 288-residue protein sequence, read N- to C-terminus: 4-diphosphocytidyl-2-C-methyl-D-erythritol kinase (288 aa).

The active site involves K13. 97–107 (PMGGGIGGGSS) lines the ATP pocket. The active site involves D139.

The protein belongs to the GHMP kinase family. IspE subfamily.

It catalyses the reaction 4-CDP-2-C-methyl-D-erythritol + ATP = 4-CDP-2-C-methyl-D-erythritol 2-phosphate + ADP + H(+). Its pathway is isoprenoid biosynthesis; isopentenyl diphosphate biosynthesis via DXP pathway; isopentenyl diphosphate from 1-deoxy-D-xylulose 5-phosphate: step 3/6. Functionally, catalyzes the phosphorylation of the position 2 hydroxy group of 4-diphosphocytidyl-2C-methyl-D-erythritol. This chain is 4-diphosphocytidyl-2-C-methyl-D-erythritol kinase, found in Saccharophagus degradans (strain 2-40 / ATCC 43961 / DSM 17024).